Here is a 359-residue protein sequence, read N- to C-terminus: Doublesex- and mab-3-related transcription factor B1 (359 aa).

The DM DNA-binding region spans 7 to 54 (CSRCRNHGYLVPVKGHTGKCRWKQCICDKCYLITERQKIMAAQKVLRT). Disordered stretches follow at residues 111 to 149 (PPQA…RDRS) and 262 to 359 (SGLV…EQSN). Composition is skewed to pro residues over residues 277 to 299 (CSPP…PQPQ) and 315 to 325 (LPPPPPPPSPP). Residues 348 to 359 (EPSQDSPQEQSN) are compositionally biased toward polar residues.

This sequence belongs to the DMRT family. As to expression, brain.

The protein localises to the nucleus. The polypeptide is Doublesex- and mab-3-related transcription factor B1 (Dmrtb1) (Mus musculus (Mouse)).